The primary structure comprises 206 residues: Holliday junction branch migration complex subunit RuvA (206 aa).

The tract at residues 1 to 64 (MIGRLRGNLL…EDAQLLYGFN (64 aa)) is domain I. A domain II region spans residues 65–143 (TKKERALFRE…GWGAGDLFTP (79 aa)). A flexible linker region spans residues 144-157 (ADTTSMDDASDLIS). Residues 158–206 (SPQSAQDEAVSALISLGYKPVQASKMVSQVAKPDMTSESLIRESLKSMI) form a domain III region.

It belongs to the RuvA family. In terms of assembly, homotetramer. Forms an RuvA(8)-RuvB(12)-Holliday junction (HJ) complex. HJ DNA is sandwiched between 2 RuvA tetramers; dsDNA enters through RuvA and exits via RuvB. An RuvB hexamer assembles on each DNA strand where it exits the tetramer. Each RuvB hexamer is contacted by two RuvA subunits (via domain III) on 2 adjacent RuvB subunits; this complex drives branch migration. In the full resolvosome a probable DNA-RuvA(4)-RuvB(12)-RuvC(2) complex forms which resolves the HJ.

It localises to the cytoplasm. The RuvA-RuvB-RuvC complex processes Holliday junction (HJ) DNA during genetic recombination and DNA repair, while the RuvA-RuvB complex plays an important role in the rescue of blocked DNA replication forks via replication fork reversal (RFR). RuvA specifically binds to HJ cruciform DNA, conferring on it an open structure. The RuvB hexamer acts as an ATP-dependent pump, pulling dsDNA into and through the RuvAB complex. HJ branch migration allows RuvC to scan DNA until it finds its consensus sequence, where it cleaves and resolves the cruciform DNA. The chain is Holliday junction branch migration complex subunit RuvA from Aliivibrio salmonicida (strain LFI1238) (Vibrio salmonicida (strain LFI1238)).